The chain runs to 204 residues: Transmembrane protein 253 (204 aa).

Helical transmembrane passes span 33–53, 62–82, 96–116, and 138–158; these read LVLA…TISV, LVTA…IITL, MMIS…IEVM, and LSAE…LFLL. A disordered region spans residues 184 to 204; that stretch reads EEVSGLENGPVVASTGNRTDE.

It is found in the membrane. This is Transmembrane protein 253 (Tmem253) from Mus musculus (Mouse).